We begin with the raw amino-acid sequence, 96 residues long: Co-chaperonin GroES (96 aa).

Belongs to the GroES chaperonin family. Heptamer of 7 subunits arranged in a ring. Interacts with the chaperonin GroEL.

It is found in the cytoplasm. Its function is as follows. Together with the chaperonin GroEL, plays an essential role in assisting protein folding. The GroEL-GroES system forms a nano-cage that allows encapsulation of the non-native substrate proteins and provides a physical environment optimized to promote and accelerate protein folding. GroES binds to the apical surface of the GroEL ring, thereby capping the opening of the GroEL channel. The chain is Co-chaperonin GroES from Geotalea uraniireducens (strain Rf4) (Geobacter uraniireducens).